A 79-amino-acid chain; its full sequence is Small ribosomal subunit protein bS20 (79 aa).

This sequence belongs to the bacterial ribosomal protein bS20 family.

Binds directly to 16S ribosomal RNA. In Karelsulcia muelleri (strain GWSS) (Sulcia muelleri), this protein is Small ribosomal subunit protein bS20.